Consider the following 119-residue polypeptide: Protein TusC (119 aa).

This sequence belongs to the DsrF/TusC family. As to quaternary structure, heterohexamer, formed by a dimer of trimers. The hexameric TusBCD complex contains 2 copies each of TusB, TusC and TusD. The TusBCD complex interacts with TusE.

It is found in the cytoplasm. Its function is as follows. Part of a sulfur-relay system required for 2-thiolation of 5-methylaminomethyl-2-thiouridine (mnm(5)s(2)U) at tRNA wobble positions. This is Protein TusC from Escherichia coli O127:H6 (strain E2348/69 / EPEC).